A 133-amino-acid polypeptide reads, in one-letter code: uncharacterized protein (133 aa).

Belongs to the ycf68 family.

It localises to the plastid. Its subcellular location is the chloroplast. This is an uncharacterized protein from Oryza sativa subsp. japonica (Rice).